The following is a 259-amino-acid chain: 5'-nucleotidase SurE 1 (259 aa).

The a divalent metal cation site is built by Asp16, Asp17, Ser48, and Asn101.

The protein belongs to the SurE nucleotidase family. A divalent metal cation is required as a cofactor.

The protein localises to the cytoplasm. It carries out the reaction a ribonucleoside 5'-phosphate + H2O = a ribonucleoside + phosphate. Functionally, nucleotidase that shows phosphatase activity on nucleoside 5'-monophosphates. The sequence is that of 5'-nucleotidase SurE 1 from Burkholderia lata (strain ATCC 17760 / DSM 23089 / LMG 22485 / NCIMB 9086 / R18194 / 383).